A 689-amino-acid chain; its full sequence is Protein asunder (689 aa).

The stretch at 521 to 550 forms a coiled coil; the sequence is NGARLKLSKAKDQYRLLYRELEQLIQLNAT. Residues 578–619 form a disordered region; that stretch reads GASLLRSYTESPLSPERLEPITSGSASGSSNSNSLLKASKRR. Residues 600 to 614 are compositionally biased toward low complexity; it reads SGSASGSSNSNSLLK. The Nuclear localization signal (NLS) signature appears at 613-619; that stretch reads LKASKRR.

Belongs to the Integrator subunit 13 family. Belongs to the multiprotein complex Integrator, at least composed of IntS1, IntS2, IntS3, IntS4, omd/IntS5, IntS6, defl/IntS7, IntS8, IntS9, IntS10, IntS11, IntS12, asun/IntS13, IntS14 and IntS15. The core complex associates with protein phosphatase 2A subunits mts/PP2A and Pp2A-29B, to form the Integrator-PP2A (INTAC) complex. Phosphorylated.

Its subcellular location is the nucleus. It is found in the cytoplasm. The protein resides in the perinuclear region. Component of the integrator complex, a multiprotein complex that terminates RNA polymerase II (Pol II) transcription in the promoter-proximal region of genes. The integrator complex provides a quality checkpoint during transcription elongation by driving premature transcription termination of transcripts that are unfavorably configured for transcriptional elongation: the complex terminates transcription by (1) catalyzing dephosphorylation of the C-terminal domain (CTD) of Pol II subunit Polr2A/Rbp1 and Spt5, and (2) degrading the exiting nascent RNA transcript via endonuclease activity. The integrator complex is also involved in the 3'-end processing of the U7 snRNA, and also the spliceosomal snRNAs U1, U2, U4 and U5. The chain is Protein asunder (asun) from Drosophila erecta (Fruit fly).